Reading from the N-terminus, the 239-residue chain is 7-cyano-7-deazaguanine synthase (239 aa).

Position 7-17 (7-17 (LSGGIDSSTLL)) interacts with ATP. Zn(2+)-binding residues include cysteine 184, cysteine 192, cysteine 195, and cysteine 198.

The protein belongs to the QueC family. Zn(2+) is required as a cofactor.

It catalyses the reaction 7-carboxy-7-deazaguanine + NH4(+) + ATP = 7-cyano-7-deazaguanine + ADP + phosphate + H2O + H(+). The protein operates within purine metabolism; 7-cyano-7-deazaguanine biosynthesis. In terms of biological role, catalyzes the ATP-dependent conversion of 7-carboxy-7-deazaguanine (CDG) to 7-cyano-7-deazaguanine (preQ(0)). The polypeptide is 7-cyano-7-deazaguanine synthase (Archaeoglobus fulgidus (strain ATCC 49558 / DSM 4304 / JCM 9628 / NBRC 100126 / VC-16)).